Consider the following 427-residue polypeptide: Acetyl-CoA acetyltransferase, mitochondrial (427 aa).

The transit peptide at 1 to 33 (MAVLAALLRGGARSRSPLLRRLVQEIRYVERSY) directs the protein to the mitochondrion. K66 is modified (N6-acetyllysine; alternate). N6-succinyllysine; alternate is present on K66. K78 is subject to N6-succinyllysine. The Acyl-thioester intermediate role is filled by C126. N6-acetyllysine; alternate occurs at positions 174, 181, 190, and 202. 4 positions are modified to N6-succinyllysine; alternate: K174, K181, K190, and K202. Position 219 (Y219) interacts with CoA. Y219 is a K(+) binding site. Residues K223 and K230 each carry the N6-acetyllysine; alternate modification. An N6-succinyllysine; alternate mark is found at K223 and K230. Residue K243 is modified to N6-succinyllysine. K251 and K257 each carry N6-acetyllysine. Residues 258–260 (RVD) and K263 contribute to the CoA site. Residue K263 is modified to N6-acetyllysine; alternate. N6-succinyllysine; alternate is present on K263. 2 positions are modified to N6-succinyllysine: K266 and K268. K273 carries the N6-acetyllysine modification. A280, A281, and A283 together coordinate K(+). S284 serves as a coordination point for CoA. Position 338 is an N6-acetyllysine (K338). V381 lines the K(+) pocket. The active-site Proton donor/acceptor is C413.

This sequence belongs to the thiolase-like superfamily. Thiolase family. In terms of assembly, homotetramer. Succinylation at Lys-268, adjacent to a coenzyme A binding site. Desuccinylated by SIRT5.

It localises to the mitochondrion. The catalysed reaction is 2 acetyl-CoA = acetoacetyl-CoA + CoA. It carries out the reaction propanoyl-CoA + acetyl-CoA = 2-methyl-3-oxobutanoyl-CoA + CoA. It functions in the pathway lipid metabolism; fatty acid beta-oxidation. Activated by potassium ions, but not sodium ions. This is one of the enzymes that catalyzes the last step of the mitochondrial beta-oxidation pathway, an aerobic process breaking down fatty acids into acetyl-CoA. Using free coenzyme A/CoA, catalyzes the thiolytic cleavage of medium- to long-chain 3-oxoacyl-CoAs into acetyl-CoA and a fatty acyl-CoA shortened by two carbon atoms. The activity of the enzyme is reversible and it can also catalyze the condensation of two acetyl-CoA molecules into acetoacetyl-CoA. Thereby, it plays a major role in ketone body metabolism. In Macaca fascicularis (Crab-eating macaque), this protein is Acetyl-CoA acetyltransferase, mitochondrial (ACAT1).